A 166-amino-acid chain; its full sequence is UPF0304 protein VC_1871 (166 aa).

The protein belongs to the UPF0304 family.

The protein is UPF0304 protein VC_1871 of Vibrio cholerae serotype O1 (strain ATCC 39315 / El Tor Inaba N16961).